Reading from the N-terminus, the 232-residue chain is Ribose-5-phosphate isomerase A (232 aa).

Substrate-binding positions include 28-31, 83-86, and 96-99; these read TGST, DGAD, and KGGG. Residue E105 is the Proton acceptor of the active site. Residue K123 coordinates substrate.

Belongs to the ribose 5-phosphate isomerase family. In terms of assembly, homodimer.

The enzyme catalyses aldehydo-D-ribose 5-phosphate = D-ribulose 5-phosphate. It participates in carbohydrate degradation; pentose phosphate pathway; D-ribose 5-phosphate from D-ribulose 5-phosphate (non-oxidative stage): step 1/1. Functionally, catalyzes the reversible conversion of ribose-5-phosphate to ribulose 5-phosphate. This Allorhizobium ampelinum (strain ATCC BAA-846 / DSM 112012 / S4) (Agrobacterium vitis (strain S4)) protein is Ribose-5-phosphate isomerase A.